Here is a 332-residue protein sequence, read N- to C-terminus: UPF0194 membrane protein YbhG (332 aa).

The N-terminal stretch at 1-16 (MMKKPVVIGLAVVVLA) is a signal peptide. Positions 108–209 (EEIAQAAAAV…LNLQDSTLIA (102 aa)) form a coiled coil.

The protein belongs to the UPF0194 family.

Its subcellular location is the periplasm. The protein is UPF0194 membrane protein YbhG of Escherichia coli (strain 55989 / EAEC).